The sequence spans 318 residues: Probable casein kinase I homolog ECU11_1980 (318 aa).

The Protein kinase domain maps to 8–276 (YTICREIGKG…YLNSLLDKIF (269 aa)). Residues 14-22 (IGKGGFGKV) and lysine 37 contribute to the ATP site. Aspartate 129 (proton acceptor) is an active-site residue.

Belongs to the protein kinase superfamily. CK1 Ser/Thr protein kinase family. Casein kinase I subfamily.

The protein resides in the nucleus. It carries out the reaction L-seryl-[protein] + ATP = O-phospho-L-seryl-[protein] + ADP + H(+). The enzyme catalyses L-threonyl-[protein] + ATP = O-phospho-L-threonyl-[protein] + ADP + H(+). In terms of biological role, involved in DNA repair. May regulate the activity of protein(s) involved in double strand break repair caused by gamma rays. The protein is Probable casein kinase I homolog ECU11_1980 of Encephalitozoon cuniculi (strain GB-M1) (Microsporidian parasite).